The primary structure comprises 505 residues: Probable alpha-L-arabinofuranosidase C (505 aa).

N-linked (GlcNAc...) asparagine glycans are attached at residues N152, N269, and N438.

The protein belongs to the glycosyl hydrolase 51 family.

It localises to the secreted. The catalysed reaction is Hydrolysis of terminal non-reducing alpha-L-arabinofuranoside residues in alpha-L-arabinosides.. It participates in glycan metabolism; L-arabinan degradation. Its function is as follows. Alpha-L-arabinofuranosidase involved in the degradation of arabinoxylan, a major component of plant hemicellulose. Acts only on small linear 1,5-alpha-linked L-arabinofuranosyl oligosaccharides. The polypeptide is Probable alpha-L-arabinofuranosidase C (abfC) (Aspergillus clavatus (strain ATCC 1007 / CBS 513.65 / DSM 816 / NCTC 3887 / NRRL 1 / QM 1276 / 107)).